A 274-amino-acid chain; its full sequence is Major capsid protein (274 aa).

It is found in the virion. Its function is as follows. Assembles to form an icosahedral capsid. The sequence is that of Major capsid protein from Staphylococcus phage phiMR11.